The primary structure comprises 245 residues: Ribosomal RNA large subunit methyltransferase E (245 aa).

The segment at 1–25 (MTKSPIGGNRSGRKLGQKVKKGKLK) is disordered. The span at 11–25 (SGRKLGQKVKKGKLK) shows a compositional bias: basic residues. S-adenosyl-L-methionine contacts are provided by Gly81, Trp83, Asp104, Asp120, and Asp144. Lys184 serves as the catalytic Proton acceptor.

Belongs to the class I-like SAM-binding methyltransferase superfamily. RNA methyltransferase RlmE family.

The protein resides in the cytoplasm. The catalysed reaction is uridine(2552) in 23S rRNA + S-adenosyl-L-methionine = 2'-O-methyluridine(2552) in 23S rRNA + S-adenosyl-L-homocysteine + H(+). Functionally, specifically methylates the uridine in position 2552 of 23S rRNA at the 2'-O position of the ribose in the fully assembled 50S ribosomal subunit. This chain is Ribosomal RNA large subunit methyltransferase E, found in Sinorhizobium fredii (strain NBRC 101917 / NGR234).